The sequence spans 241 residues: Methylthioribulose-1-phosphate dehydratase (241 aa).

Basic and acidic residues predominate over residues 1–12; sequence MSQEITQKDNND. A disordered region spans residues 1–22; it reads MSQEITQKDNNDHLVQSSDPDH. C101 serves as a coordination point for substrate. H118 and H120 together coordinate Zn(2+). Catalysis depends on E147, which acts as the Proton donor/acceptor. H203 provides a ligand contact to Zn(2+).

This sequence belongs to the aldolase class II family. MtnB subfamily. The cofactor is Zn(2+).

Its subcellular location is the cytoplasm. The catalysed reaction is 5-(methylsulfanyl)-D-ribulose 1-phosphate = 5-methylsulfanyl-2,3-dioxopentyl phosphate + H2O. Its pathway is amino-acid biosynthesis; L-methionine biosynthesis via salvage pathway; L-methionine from S-methyl-5-thio-alpha-D-ribose 1-phosphate: step 2/6. Its function is as follows. Catalyzes the dehydration of methylthioribulose-1-phosphate (MTRu-1-P) into 2,3-diketo-5-methylthiopentyl-1-phosphate (DK-MTP-1-P). The chain is Methylthioribulose-1-phosphate dehydratase from Aspergillus terreus (strain NIH 2624 / FGSC A1156).